The sequence spans 167 residues: Lipoprotein signal peptidase (167 aa).

A run of 2 helical transmembrane segments spans residues Phe56–Phe76 and Thr84–Asp104. Residues Asp113 and Asp139 contribute to the active site. Residues Trp132–Phe152 traverse the membrane as a helical segment.

It belongs to the peptidase A8 family.

It localises to the cell inner membrane. It catalyses the reaction Release of signal peptides from bacterial membrane prolipoproteins. Hydrolyzes -Xaa-Yaa-Zaa-|-(S,diacylglyceryl)Cys-, in which Xaa is hydrophobic (preferably Leu), and Yaa (Ala or Ser) and Zaa (Gly or Ala) have small, neutral side chains.. It participates in protein modification; lipoprotein biosynthesis (signal peptide cleavage). In terms of biological role, this protein specifically catalyzes the removal of signal peptides from prolipoproteins. The sequence is that of Lipoprotein signal peptidase from Chlorobium luteolum (strain DSM 273 / BCRC 81028 / 2530) (Pelodictyon luteolum).